The primary structure comprises 541 residues: FAD-linked oxidoreductase pynB (541 aa).

The signal sequence occupies residues 1–20 (MRLSARGFVWSALLACTASA). Residues asparagine 30, asparagine 57, asparagine 117, asparagine 131, asparagine 158, asparagine 253, asparagine 306, asparagine 343, asparagine 430, and asparagine 461 are each glycosylated (N-linked (GlcNAc...) asparagine). Residues 71-242 (FNEFPALIAY…VDFDLQLMQF (172 aa)) enclose the FAD-binding PCMH-type domain.

It belongs to the oxygen-dependent FAD-linked oxidoreductase family. The cofactor is FAD.

The protein operates within secondary metabolite biosynthesis. Functionally, FAD-linked oxidoreductase; part of the gene cluster that mediates the biosynthesis of pyranonigrins, a family of antioxidative compounds. The first step of pyranonigrins biosynthesis is performed by the hybrid PKS-NRPS synthetase that condenses 6 malonyl-CoA units to an acetyl starter unit, to form a 1,3,5-trioxotetradecane-6,8-dienyl-ACP. The enoyl reductase (ER) domain of pynA is likely to be functional during the first two rounds of polyketide chain extension, to generate the saturated C-C bonds of the alkyl side chain. PynA subsequently forms the amide bond between the acyl chain and L-serine. Although pynA has a terminal reductase domain, it appears to require the thioesterase pynI for the release of the straight-chain intermediate from pynA via the formation of a tetramic acid pyranonigrin J. The methyltransferase pynC then coverts pyranonigrin J to pyranonigrin I via N-methylation. The FAD-dependent monooxygenase pynG catalyzes an epoxidation-mediated cyclization to form the dihydro-gamma-pyrone moiety, followed by pynD-catalyzed oxidation of the alcohol to the ketone and enolization to yield the characteristic tetramic acid-fused gamma-pyrone core of pyranonigrin H. Pyranonigrin H is substrate of pynH for dehydration-mediated exo-methylene formation from the serine side chain to produce pyranonigrin E, before the oxidase pynE reduces the exo-methylene of pyranonigrin E into a pendant methyl to form pyranonigrin G. The FAD-linked oxidoreductase pynB performs the reverse reaction and converts pyranonigrin G back to pyranonigrin E. The polypeptide is FAD-linked oxidoreductase pynB (Aspergillus niger (strain ATCC MYA-4892 / CBS 513.88 / FGSC A1513)).